A 247-amino-acid polypeptide reads, in one-letter code: Flagellin B1 (247 aa).

Positions 1–20 (MNKLLRKVRKAFSLKADNKA) are excised as a propeptide.

The protein belongs to the archaeal flagellin family. Post-translationally, glycosylated.

Its subcellular location is the archaeal flagellum. In terms of biological role, flagellin is the subunit protein which polymerizes to form the filaments of archaeal flagella. The sequence is that of Flagellin B1 from Thermoplasma volcanium (strain ATCC 51530 / DSM 4299 / JCM 9571 / NBRC 15438 / GSS1).